Consider the following 485-residue polypeptide: CUGBP Elav-like family member 5 (485 aa).

A compositionally biased stretch (basic and acidic residues) spans methionine 1–arginine 11. A disordered region spans residues methionine 1 to lysine 40. The span at glutamine 12–glycine 28 shows a compositional bias: low complexity. 3 RRM domains span residues isoleucine 45–serine 126, arginine 134–threonine 214, and cysteine 400–proline 478.

This sequence belongs to the CELF/BRUNOL family. In terms of tissue distribution, expressed in brain.

The protein resides in the nucleus. The protein localises to the cytoplasm. Its function is as follows. RNA-binding protein implicated in the regulation of pre-mRNA alternative splicing. Mediates exon inclusion and/or exclusion in pre-mRNA that are subject to tissue-specific and developmentally regulated alternative splicing. Specifically activates exon 5 inclusion of cardiac isoforms of TNNT2 during heart remodeling at the juvenile to adult transition. Binds to muscle-specific splicing enhancer (MSE) intronic sites flanking the alternative exon 5 of TNNT2 pre-mRNA. The chain is CUGBP Elav-like family member 5 (CELF5) from Homo sapiens (Human).